Here is a 397-residue protein sequence, read N- to C-terminus: Zinc finger CCCH domain-containing protein 33 (397 aa).

5 C3H1-type zinc fingers span residues 40-68 (RPGEPDCSYYIRTGLCRFGSTCRFNHPRD), 85-113 (RIGQPECEYYLKTGTCKFGVTCKFHHPRN), 131-159 (RSNEVDCAYFLRTGHCKFGGTCKFNHPQP), 274-302 (RPGQPECQFYMKTGDCKFGTVCKFHHPRD), and 320-348 (RPGEPLCVFYTRYGICKFGPSCKFDHPMR). Residues 361-397 (EVVETSTGKSRRLSVSETRQAATTSSGKDTTIDNTQQ) form a disordered region. The span at 364-397 (ETSTGKSRRLSVSETRQAATTSSGKDTTIDNTQQ) shows a compositional bias: polar residues.

Its subcellular location is the nucleus. The polypeptide is Zinc finger CCCH domain-containing protein 33 (ZFN1) (Arabidopsis thaliana (Mouse-ear cress)).